The following is a 150-amino-acid chain: Detocs response regulatory protein DtcB (150 aa).

Residues 2 to 150 (KILIADDNIQ…TDLIKKITEL (149 aa)) form the Response regulatory domain. Asp54 bears the 4-aspartylphosphate mark.

In terms of processing, probably phosphorylated by DtcA.

Functionally, possible phosphate scavenger member of the two-component regulatory system Detocs that confers resistance to bacteriophage. When the system (DtcA-DtcB-DtcC) is expressed in a susceptible E.coli (strain MG1655) it confers resistance to bacteriophages T2, T4, T5, T7, SECphi4, SECphi6 and SECphi27; the level of resistance varies, resistance to T2, T7 and SECphi4 is not very high. DtcA probably autophosphorylates upon sensing viral infection, and subsequently transfers the phosphate signal to DtcC which activates it, leading to an antiviral defense; DtcB (this subunit) may scavenge phosphorylation signals from accidental activation of DtcA. The chain is Detocs response regulatory protein DtcB from Enterobacter cloacae (strain JD6301).